The primary structure comprises 101 residues: Protein S100-A4 (101 aa).

At Ala2 the chain carries N-acetylalanine. EF-hand domains lie at 12–47 and 50–85; these read IVST…SFLG and TDEA…IAMM. Residues Lys28 and Glu33 each coordinate Ca(2+). Lys35 carries the N6-acetyllysine modification. Ca(2+)-binding residues include Asp63, Asn65, Asp67, Glu69, and Glu74.

Belongs to the S-100 family. Homodimer. Interacts with PPFIBP1 in a calcium-dependent mode. Interacts with PGLYRP1; this complex acts as a chemoattractant that promotes lymphocyte movement. Interacts with MYH9; this interaction increases cell motility. Interacts with Annexin 2/ANXA2. Interacts with TP53; this interaction promotes TP53 degradation. Interacts with CCR5 and CXCR3. Interacts with FCGR3A; this interaction inhibits PKC-dependent phosphorylation of FCGR3A. Specifically expressed in different metastatic cells.

It is found in the secreted. The protein resides in the nucleus. Its subcellular location is the cytoplasm. Functionally, calcium-binding protein that plays a role in various cellular processes including motility, angiogenesis, cell differentiation, apoptosis, and autophagy. Increases cell motility and invasiveness by interacting with non-muscle myosin heavy chain (NMMHC) IIA/MYH9. Mechanistically, promotes filament depolymerization and increases the amount of soluble myosin-IIA, resulting in the formation of stable protrusions facilitating chemotaxis. Also modulates the pro-apoptotic function of TP53 by binding to its C-terminal transactivation domain within the nucleus and reducing its protein levels. Within the extracellular space, stimulates cytokine production including granulocyte colony-stimulating factor and CCL24 from T-lymphocytes. In addition, stimulates T-lymphocyte chemotaxis by acting as a chemoattractant complex with PGLYRP1 that promotes lymphocyte migration via CCR5 and CXCR3 receptors. The polypeptide is Protein S100-A4 (S100a4) (Mus musculus (Mouse)).